Reading from the N-terminus, the 440-residue chain is N-succinylarginine dihydrolase (440 aa).

Residues 17–26, asparagine 108, and 135–136 contribute to the substrate site; these read GGLSPGNLAS and HR. Residues 17–37 are disordered; it reads GGLSPGNLASQSHVGEPSHPR. Glutamate 172 is a catalytic residue. Arginine 210 provides a ligand contact to substrate. Residue histidine 246 is part of the active site. Residues aspartate 248 and asparagine 358 each contribute to the substrate site. Catalysis depends on cysteine 364, which acts as the Nucleophile.

Belongs to the succinylarginine dihydrolase family. As to quaternary structure, homodimer.

The catalysed reaction is N(2)-succinyl-L-arginine + 2 H2O + 2 H(+) = N(2)-succinyl-L-ornithine + 2 NH4(+) + CO2. It participates in amino-acid degradation; L-arginine degradation via AST pathway; L-glutamate and succinate from L-arginine: step 2/5. Catalyzes the hydrolysis of N(2)-succinylarginine into N(2)-succinylornithine, ammonia and CO(2). In Myxococcus xanthus (strain DK1622), this protein is N-succinylarginine dihydrolase.